The chain runs to 595 residues: Peptidyl-prolyl cis-trans isomerase CYP65 (595 aa).

One can recognise a U-box domain in the interval 35-108 (KSLPYYCCAL…GEYHCPVLNK (74 aa)). The PPIase cyclophilin-type domain maps to 342-496 (KKGYVQFQTT…EEIKIIEASV (155 aa)). Disordered stretches follow at residues 503-546 (ELDE…GGGG) and 576-595 (SKKR…FSSW). Over residues 510-525 (KEKAEKEKNEDKDIEK) the composition is skewed to basic and acidic residues. The segment covering 582-595 (TASASTGFKDFSSW) has biased composition (polar residues).

The protein belongs to the cyclophilin-type PPIase family. PPIL2 subfamily. Expressed in leaves, flower buds and stems. Lower levels of expression in roots.

It is found in the nucleus. It carries out the reaction [protein]-peptidylproline (omega=180) = [protein]-peptidylproline (omega=0). The enzyme catalyses S-ubiquitinyl-[E2 ubiquitin-conjugating enzyme]-L-cysteine + [acceptor protein]-L-lysine = [E2 ubiquitin-conjugating enzyme]-L-cysteine + N(6)-ubiquitinyl-[acceptor protein]-L-lysine.. It participates in protein modification; protein ubiquitination. Its function is as follows. May catalyze the cis-trans isomerization of proline imidic peptide bonds in oligopeptides thereby assisting the folding of proteins. May also function as a chaperone, playing a role in intracellular transport of proteins. May also have a protein ubiquitin ligase activity acting as an E3 ubiquitin protein ligase or as a ubiquitin-ubiquitin ligase promoting elongation of ubiquitin chains on proteins. This is Peptidyl-prolyl cis-trans isomerase CYP65 (CYP65) from Arabidopsis thaliana (Mouse-ear cress).